The chain runs to 242 residues: Universal stress protein PHOS32 (242 aa).

The N-terminal 43 residues, 1–43, are a transit peptide targeting the chloroplast; that stretch reads MNPADSDHPQLPNIKIHHPPSPRHSHHHHSSSTPSSAATPTPT. The disordered stretch occupies residues 1-45; it reads MNPADSDHPQLPNIKIHHPPSPRHSHHHHSSSTPSSAATPTPTAG. Residues 15 to 30 show a composition bias toward basic residues; that stretch reads KIHHPPSPRHSHHHHS. Proline 19 contacts ATP. Position 21 is a phosphoserine; by MAPK3 and MAPK6 (serine 21). A compositionally biased stretch (low complexity) spans 31–44; it reads SSTPSSAATPTPTA. Residues valine 83, 168-178, and 186-188 each bind ATP; these read GSRGFGAEKKR and SVS. Serine 219 is subject to Phosphoserine.

This sequence belongs to the universal stress protein A family. Phosphorylated by MAPK3 and MAPK6 after pathogenic elicitation (e.g. bacterial flg22, Phytophthora infestans zoospores and xylanase).

Its subcellular location is the plastid. The protein resides in the chloroplast. The sequence is that of Universal stress protein PHOS32 from Arabidopsis thaliana (Mouse-ear cress).